Reading from the N-terminus, the 134-residue chain is Cytochrome b5 (134 aa).

Ala2 is subject to N-acetylalanine. 3 positions are modified to N6-acetyllysine: Lys7, Lys10, and Lys19. The 77-residue stretch at 9–85 (VKYYTLEEIQ…SKTYIIGELH (77 aa)) folds into the Cytochrome b5 heme-binding domain. Residues His44 and His68 each coordinate heme. The helical transmembrane segment at 109–131 (WWTNWVIPAISALAVALMYRLYM) threads the bilayer.

This sequence belongs to the cytochrome b5 family.

It localises to the endoplasmic reticulum membrane. It is found in the microsome membrane. Functionally, cytochrome b5 is a membrane-bound hemoprotein functioning as an electron carrier for several membrane-bound oxygenases. It is also involved in several steps of the sterol biosynthesis pathway, particularly in the C-5 double bond introduction during the C-5 desaturation. The sequence is that of Cytochrome b5 (Cyb5a) from Mus musculus (Mouse).